The following is a 272-amino-acid chain: Bifunctional protein FolD 2 (272 aa).

Residues 157–159, T182, and I223 contribute to the NADP(+) site; that span reads GRS.

It belongs to the tetrahydrofolate dehydrogenase/cyclohydrolase family. As to quaternary structure, homodimer.

It catalyses the reaction (6R)-5,10-methylene-5,6,7,8-tetrahydrofolate + NADP(+) = (6R)-5,10-methenyltetrahydrofolate + NADPH. The catalysed reaction is (6R)-5,10-methenyltetrahydrofolate + H2O = (6R)-10-formyltetrahydrofolate + H(+). Its pathway is one-carbon metabolism; tetrahydrofolate interconversion. Functionally, catalyzes the oxidation of 5,10-methylenetetrahydrofolate to 5,10-methenyltetrahydrofolate and then the hydrolysis of 5,10-methenyltetrahydrofolate to 10-formyltetrahydrofolate. The sequence is that of Bifunctional protein FolD 2 from Syntrophomonas wolfei subsp. wolfei (strain DSM 2245B / Goettingen).